The chain runs to 275 residues: Autophagy protein 5 (275 aa).

Residue M1 is modified to N-acetylmethionine. A Glycyl lysine isopeptide (Lys-Gly) (interchain with G-Cter in ATG12) cross-link involves residue K130.

This sequence belongs to the ATG5 family. Forms a conjugate with ATG12. Part of the minor complex composed of 4 sets of ATG12-ATG5 and ATG16L1 (400 kDa); this complex interacts with ATG3 leading to disruption of ATG7 interaction and promotion of ATG8-like proteins lipidation. Forms an 800-kDa complex composed of ATG12-ATG5 and ATG16L2. The ATG12-ATG5 conjugate interacts with RAB33A; this interaction is bridged by ATG16L1 and promotes ATG12-ATG5-ATG16L1 complex recruitment to phagophores. Interacts with TECPR1; the interaction is direct and does not take place when ATG16L1 is associated with the ATG5-ATG12 conjugate. Interacts with DHX58/RIG-1, IFIH1/MDA5 and MAVS/IPS-1 in monomeric form as well as in ATG12-ATG5 conjugate form. The interaction with MAVS is further enhanced upon vesicular stomatitis virus (VSV) infection. Interacts with ATG3. Interacts with ATG7 and ATG10. Interacts with FADD. Interacts with Bassoon/BSN; this interaction is important for the regulation of presynaptic autophagy. Interacts with ATG16L2. Conjugated to ATG12; which is essential for autophagy, but is not required for association with isolation membrane. In terms of processing, acetylated by EP300.

Its subcellular location is the cytoplasm. It is found in the preautophagosomal structure membrane. Its function is as follows. Involved in autophagic vesicle formation. Conjugation with ATG12, through a ubiquitin-like conjugating system involving ATG7 as an E1-like activating enzyme and ATG10 as an E2-like conjugating enzyme, is essential for its function. The ATG12-ATG5 conjugate acts as an E3-like enzyme which is required for lipidation of ATG8 family proteins and their association to the vesicle membranes. Involved in mitochondrial quality control after oxidative damage, and in subsequent cellular longevity. Plays a critical role in multiple aspects of lymphocyte development and is essential for both B and T lymphocyte survival and proliferation. Required for optimal processing and presentation of antigens for MHC II. Involved in the maintenance of axon morphology and membrane structures, as well as in normal adipocyte differentiation. Promotes primary ciliogenesis through removal of OFD1 from centriolar satellites and degradation of IFT20 via the autophagic pathway. As part of the ATG8 conjugation system with ATG12 and ATG16L1, required for recruitment of LRRK2 to stressed lysosomes and induction of LRRK2 kinase activity in response to lysosomal stress. May play an important role in the apoptotic process, possibly within the modified cytoskeleton. Its expression is a relatively late event in the apoptotic process, occurring downstream of caspase activity. Plays a crucial role in IFN-gamma-induced autophagic cell death by interacting with FADD. This is Autophagy protein 5 from Bos taurus (Bovine).